Reading from the N-terminus, the 262-residue chain is Proenkephalin-A-A (262 aa).

A signal peptide spans M1–A24. Disulfide bonds link C26/C48, C30/C52, and C33/C65. 5 consecutive propeptides follow at residues M110 to N131, E139 to N177, S190 to Q201, V211 to Q221, and T229 to E253.

This sequence belongs to the opioid neuropeptide precursor family. The N-terminal domain contains 6 conserved cysteines thought to be involved in disulfide bonding and/or processing.

It localises to the secreted. Functionally, enkephalin neuropeptides compete with and mimic the effects of opiate drugs. They play a role in a number of physiologic functions, including pain perception and responses to stress. The protein is Proenkephalin-A-A (penk-a) of Xenopus laevis (African clawed frog).